The primary structure comprises 55 residues: Large ribosomal subunit protein bL33 (55 aa).

Residues 1 to 11 (MAKGSREKIKL) are compositionally biased toward basic and acidic residues. A disordered region spans residues 1-32 (MAKGSREKIKLESSASTGHFYTTSKNKRTKPE). Residues 13-24 (SSASTGHFYTTS) are compositionally biased toward polar residues.

Belongs to the bacterial ribosomal protein bL33 family.

The protein is Large ribosomal subunit protein bL33 of Polynucleobacter necessarius subsp. necessarius (strain STIR1).